A 397-amino-acid chain; its full sequence is L-asparaginase-like protein CG4372 (397 aa).

A signal peptide spans 1–22 (MLAQSCCLRLLILLLLFTTIGS). 3 cysteine pairs are disulfide-bonded: cysteine 90/cysteine 95, cysteine 189/cysteine 205, and cysteine 344/cysteine 371.

This sequence belongs to the Ntn-hydrolase family.

The protein is L-asparaginase-like protein CG4372 of Drosophila melanogaster (Fruit fly).